We begin with the raw amino-acid sequence, 287 residues long: Small ribosomal subunit protein uS3 (287 aa).

In terms of domain architecture, KH type-2 spans 38–106 (IRRLLATGLE…QVQLNILEVK (69 aa)). The interval 216 to 287 (AAAPAGADRP…AETTTQNPGS (72 aa)) is disordered. Residues 238-287 (SGASGTTATSTDAGRAASGTQEAPAAAEAAAGTEAAAGAAAETTTQNPGS) are compositionally biased toward low complexity.

This sequence belongs to the universal ribosomal protein uS3 family. Part of the 30S ribosomal subunit. Forms a tight complex with proteins S10 and S14.

Functionally, binds the lower part of the 30S subunit head. Binds mRNA in the 70S ribosome, positioning it for translation. In Mycobacterium sp. (strain JLS), this protein is Small ribosomal subunit protein uS3.